We begin with the raw amino-acid sequence, 263 residues long: Tetraspanin-7 (263 aa).

Residues 1–7 are Cytoplasmic-facing; it reads MVQCSNN. Residues 8-28 traverse the membrane as a helical segment; sequence LLGILNFFTFLLSIPILSAGI. Residues 29 to 45 lie on the Extracellular side of the membrane; that stretch reads WLGKNAATECERFLDKP. A helical transmembrane segment spans residues 46 to 66; the sequence is MVVLGIFLMFVSIAGLVGACC. Topologically, residues 67-75 are cytoplasmic; that stretch reads RVSCLLWLY. Residues 76–96 traverse the membrane as a helical segment; it reads LFAMFLLILLGFCFTIFAFAV. The Extracellular segment spans residues 97–234; it reads TNRGAGEVIS…NIKNSWKKVA (138 aa). N-linked (GlcNAc...) asparagine glycosylation is present at Asn180. A helical transmembrane segment spans residues 235 to 255; the sequence is KVNIVFLIFLIIVYSVGCCAF. The Cytoplasmic portion of the chain corresponds to 256–263; it reads RNNRKRSW.

Belongs to the tetraspanin (TM4SF) family.

The protein resides in the membrane. Its function is as follows. May be involved in the regulation of cell differentiation. The sequence is that of Tetraspanin-7 (TET7) from Arabidopsis thaliana (Mouse-ear cress).